The sequence spans 141 residues: Putative lipoprotein Tanf_09445 (141 aa).

The N-terminal stretch at 1–20 is a signal peptide; it reads MKQKIILWIGALLLLTAGTG. Cysteine 21 carries N-palmitoyl cysteine lipidation. Cysteine 21 is lipidated: S-diacylglycerol cysteine.

Its subcellular location is the cell membrane. The polypeptide is Putative lipoprotein Tanf_09445 (Tannerella forsythia (strain ATCC 43037 / JCM 10827 / CCUG 21028 A / KCTC 5666 / FDC 338) (Bacteroides forsythus)).